Here is a 617-residue protein sequence, read N- to C-terminus: Neurosecretory protein VGF (617 aa).

The N-terminal stretch at 1–23 (MKTFTLPASVLFCFLLLIQGLGA) is a signal peptide. Disordered stretches follow at residues 29–75 (PDVF…GELF), 93–204 (RPAS…ESPG), and 239–262 (SESAPLPETHQFGEGVSSPKTHLG). The span at 48 to 64 (AVSRPKDDGVPEVRAAR) shows a compositional bias: basic and acidic residues. Positions 149-160 (DPEEDDRSEELE) are enriched in acidic residues. The span at 182–197 (ETAAAETETRTHTLTR) shows a compositional bias: low complexity. Pyrrolidone carboxylic acid is present on glutamine 313. Residues 345–364 (RQRDLGGRELQETQQERENE) are compositionally biased toward basic and acidic residues. The tract at residues 345–599 (RQRDLGGREL…EEADAEERRL (255 aa)) is disordered. The segment covering 378-397 (EDDVGEEDEEAAEAEAEAEE) has biased composition (acidic residues). Residues 418–436 (AEDKRSQEEAPGHRRKDAE) show a composition bias toward basic and acidic residues. Serine 423 carries the post-translational modification Phosphoserine. Residues 437-452 (GAEEGGEEDDDDEEMD) show a composition bias toward acidic residues. Residues 491-501 (PPEPVPPPRAA) show a composition bias toward pro residues. The span at 577-599 (HHPDLEAQARRAQEEADAEERRL) shows a compositional bias: basic and acidic residues.

As to quaternary structure, interacts with HSPA8 on cell membrane. Interacts with C3AR1. Interacts with C1QBP.

It is found in the secreted. The protein resides in the cytoplasmic vesicle. It localises to the secretory vesicle. Its function is as follows. Secreted polyprotein that is packaged and proteolytically processed by prohormone convertases PCSK1 and PCSK2 in a cell-type-specific manner. VGF and peptides derived from its processing play many roles in neurogenesis and neuroplasticity associated with learning, memory, depression and chronic pain. Plays a role in the control of body fluid homeostasis by regulating vasopressin release. Suppresses presynaptic glutamatergic neurons connected to vasopressin neurons. In terms of biological role, plays a role in the control of body fluid homeostasis by regulating vasopressin release. Activates GABAergic interneurons which are inhibitory neurons of the nervous system and thereby suppresses presynaptic glutamatergic neurons. Also stimulates feeding behavior in an orexin-dependent manner in the hypothalamus. Functions as a positive regulator for the activation of orexin neurons resulting in elevated gastric acid secretion and gastric emptying. Functionally, secreted multifunctional peptide that interacts with different receptors and thereby plays multiple physiological roles including modulation of energy expenditure, pain, response to stress, gastric regulation as well as lipolysis. Activates the G-protein-coupled receptor C3AR1 via a folding-upon-binding mechanism leading to enhanced lipolysis in adipocytes. Interacts with gC1qR receptor in macrophages and microglia causing increased levels of intracellular calcium and hypersensitivity. Its function is as follows. Plays a role in the regulation of memory formation and depression-related behaviors potentially by influencing synaptic plasticity and neurogenesis. Induces acute and transient activation of the NTRK2/TRKB receptor and subsequent CREB phosphorylation. Also induces insulin secretion in insulinoma cells by increasing intracellular calcium mobilization. This chain is Neurosecretory protein VGF, found in Mus musculus (Mouse).